The sequence spans 70 residues: MTIIRVKENEPFEVAMRRFKRTIEKNGLLTELRAREFYEKPTAERKRKKAAAVKRHYKRIRSQMLPKKLY.

The protein belongs to the bacterial ribosomal protein bS21 family.

The polypeptide is Small ribosomal subunit protein bS21C (Burkholderia pseudomallei (strain 1710b)).